The sequence spans 207 residues: FMN-dependent NADH:quinone oxidoreductase (207 aa).

Position 10 (Ser-10) interacts with FMN.

Belongs to the azoreductase type 1 family. Homodimer. The cofactor is FMN.

It catalyses the reaction 2 a quinone + NADH + H(+) = 2 a 1,4-benzosemiquinone + NAD(+). The catalysed reaction is N,N-dimethyl-1,4-phenylenediamine + anthranilate + 2 NAD(+) = 2-(4-dimethylaminophenyl)diazenylbenzoate + 2 NADH + 2 H(+). Its function is as follows. Quinone reductase that provides resistance to thiol-specific stress caused by electrophilic quinones. Also exhibits azoreductase activity. Catalyzes the reductive cleavage of the azo bond in aromatic azo compounds to the corresponding amines. This chain is FMN-dependent NADH:quinone oxidoreductase, found in Shouchella clausii (strain KSM-K16) (Alkalihalobacillus clausii).